Consider the following 139-residue polypeptide: MSMKYLMLLFATMIIRSFADSGNAIETTSPEITNTTTDIPAIRLCGPEGDGYCLHGDCIHARDINGMYCRCSHGYTGIRCQHVVLVDYQRSEKPNTTTSYIPSPGIVLVLVGIIMCCLLSVYRFTRRTNKLPLQDMVVP.

Residues 1–19 (MSMKYLMLLFATMIIRSFA) form the signal peptide. Asn-34 is a glycosylation site (N-linked (GlcNAc...) asparagine; by host). The region spanning 41-81 (AIRLCGPEGDGYCLHGDCIHARDINGMYCRCSHGYTGIRCQ) is the EGF-like domain. Disulfide bonds link Cys-45-Cys-58, Cys-53-Cys-69, and Cys-71-Cys-80. A glycan (N-linked (GlcNAc...) asparagine; by host) is linked at Asn-95.

It belongs to the orthopoxvirus OPG019 family.

It localises to the secreted. Functionally, stimulates cellular proliferation (hyperplasia)and mobility around infected cells to promote rapid and efficient spread of infection. This is Growth factor (OPG019) from Camelus.